The chain runs to 314 residues: Ribosomal RNA small subunit methyltransferase H (314 aa).

S-adenosyl-L-methionine is bound by residues 35–37 (GGH), aspartate 55, phenylalanine 79, aspartate 101, and glutamine 108. Positions 276 to 296 (QGGQTLKPVGKKLMPSEAEVA) are disordered.

This sequence belongs to the methyltransferase superfamily. RsmH family.

Its subcellular location is the cytoplasm. The enzyme catalyses cytidine(1402) in 16S rRNA + S-adenosyl-L-methionine = N(4)-methylcytidine(1402) in 16S rRNA + S-adenosyl-L-homocysteine + H(+). Functionally, specifically methylates the N4 position of cytidine in position 1402 (C1402) of 16S rRNA. The sequence is that of Ribosomal RNA small subunit methyltransferase H from Pectobacterium atrosepticum (strain SCRI 1043 / ATCC BAA-672) (Erwinia carotovora subsp. atroseptica).